The sequence spans 424 residues: Elongation factor 1-alpha (424 aa).

One can recognise a tr-type G domain in the interval 5–223; that stretch reads KPHLNLAFIG…NALKEPQKPV (219 aa). Positions 14 to 21 are G1; the sequence is GHVDHGKS. GTP is bound at residue 14–21; sequence GHVDHGKS. Ser21 lines the Mg(2+) pocket. Positions 70 to 74 are G2; that stretch reads GVTID. The G3 stretch occupies residues 91–94; it reads DCPG. Residues 91–95 and 146–149 each bind GTP; these read DCPGH and NKMD. The tract at residues 146–149 is G4; the sequence is NKMD. Positions 187–189 are G5; the sequence is SAY.

This sequence belongs to the TRAFAC class translation factor GTPase superfamily. Classic translation factor GTPase family. EF-Tu/EF-1A subfamily.

It is found in the cytoplasm. The enzyme catalyses GTP + H2O = GDP + phosphate + H(+). In terms of biological role, GTP hydrolase that promotes the GTP-dependent binding of aminoacyl-tRNA to the A-site of ribosomes during protein biosynthesis. The protein is Elongation factor 1-alpha of Methanothrix thermoacetophila (strain DSM 6194 / JCM 14653 / NBRC 101360 / PT) (Methanosaeta thermophila).